The following is a 219-amino-acid chain: uncharacterized protein (219 aa).

This is an uncharacterized protein from Escherichia coli (strain K12).